The chain runs to 82 residues: DNA-directed RNA polymerase subunit omega (82 aa).

This sequence belongs to the RNA polymerase subunit omega family. In cyanobacteria the RNAP catalytic core is composed of 2 alpha, 1 beta, 1 beta', 1 gamma and 1 omega subunit. When a sigma factor is associated with the core the holoenzyme is formed, which can initiate transcription.

It catalyses the reaction RNA(n) + a ribonucleoside 5'-triphosphate = RNA(n+1) + diphosphate. Functionally, promotes RNA polymerase assembly. Latches the N- and C-terminal regions of the beta' subunit thereby facilitating its interaction with the beta and alpha subunits. This Synechococcus sp. (strain CC9902) protein is DNA-directed RNA polymerase subunit omega.